Here is a 334-residue protein sequence, read N- to C-terminus: Phosphate acyltransferase (334 aa).

It belongs to the PlsX family. In terms of assembly, homodimer. Probably interacts with PlsY.

It localises to the cytoplasm. The enzyme catalyses a fatty acyl-[ACP] + phosphate = an acyl phosphate + holo-[ACP]. It functions in the pathway lipid metabolism; phospholipid metabolism. Functionally, catalyzes the reversible formation of acyl-phosphate (acyl-PO(4)) from acyl-[acyl-carrier-protein] (acyl-ACP). This enzyme utilizes acyl-ACP as fatty acyl donor, but not acyl-CoA. This chain is Phosphate acyltransferase, found in Clostridium kluyveri (strain NBRC 12016).